Consider the following 150-residue polypeptide: Group IIC secretory phospholipase A2 (150 aa).

Residues 1–20 (MKGIAIFLVFIFYWTTSTLS) form the signal peptide. 8 cysteine pairs are disulfide-bonded: cysteine 46/cysteine 143, cysteine 48/cysteine 64, cysteine 63/cysteine 121, cysteine 69/cysteine 150, cysteine 70/cysteine 114, cysteine 79/cysteine 107, cysteine 97/cysteine 112, and cysteine 99/cysteine 105. 3 residues coordinate Ca(2+): tyrosine 47, glycine 49, and glycine 51. Histidine 67 is a catalytic residue. Aspartate 68 contributes to the Ca(2+) binding site. Asparagine 92 is a glycosylation site (N-linked (GlcNAc...) asparagine). Aspartate 115 is a catalytic residue.

The protein belongs to the phospholipase A2 family. Requires Ca(2+) as cofactor. As to expression, testis specific.

The protein localises to the secreted. It catalyses the reaction a 1,2-diacyl-sn-glycero-3-phosphocholine + H2O = a 1-acyl-sn-glycero-3-phosphocholine + a fatty acid + H(+). Functionally, PA2 catalyzes the calcium-dependent hydrolysis of the 2-acyl groups in 3-sn-phosphoglycerides. Testis PA2 may be important in the production of prostaglandins, by the release of arachidonic acid, which in turn are necessary for the contractions of the seminiferous tubules and the testicular capsule; they also seem to decrease sperm transit time through the male reproductive tract. The chain is Group IIC secretory phospholipase A2 (Pla2g2c) from Mus musculus (Mouse).